The sequence spans 159 residues: Ribosomal RNA large subunit methyltransferase H (159 aa).

Residues leucine 76, glycine 108, and 127–132 each bind S-adenosyl-L-methionine; that span reads FSKMTF.

This sequence belongs to the RNA methyltransferase RlmH family. As to quaternary structure, homodimer.

The protein resides in the cytoplasm. It catalyses the reaction pseudouridine(1915) in 23S rRNA + S-adenosyl-L-methionine = N(3)-methylpseudouridine(1915) in 23S rRNA + S-adenosyl-L-homocysteine + H(+). Functionally, specifically methylates the pseudouridine at position 1915 (m3Psi1915) in 23S rRNA. The protein is Ribosomal RNA large subunit methyltransferase H of Bifidobacterium longum (strain DJO10A).